We begin with the raw amino-acid sequence, 219 residues long: Protein-L-isoaspartate O-methyltransferase (219 aa).

Ser60 is a catalytic residue.

The protein belongs to the methyltransferase superfamily. L-isoaspartyl/D-aspartyl protein methyltransferase family.

Its subcellular location is the cytoplasm. The catalysed reaction is [protein]-L-isoaspartate + S-adenosyl-L-methionine = [protein]-L-isoaspartate alpha-methyl ester + S-adenosyl-L-homocysteine. Catalyzes the methyl esterification of L-isoaspartyl residues in peptides and proteins that result from spontaneous decomposition of normal L-aspartyl and L-asparaginyl residues. It plays a role in the repair and/or degradation of damaged proteins. This is Protein-L-isoaspartate O-methyltransferase from Rhodospirillum rubrum (strain ATCC 11170 / ATH 1.1.1 / DSM 467 / LMG 4362 / NCIMB 8255 / S1).